A 113-amino-acid polypeptide reads, in one-letter code: Putative pterin-4-alpha-carbinolamine dehydratase (113 aa).

This sequence belongs to the pterin-4-alpha-carbinolamine dehydratase family.

The catalysed reaction is (4aS,6R)-4a-hydroxy-L-erythro-5,6,7,8-tetrahydrobiopterin = (6R)-L-erythro-6,7-dihydrobiopterin + H2O. The protein is Putative pterin-4-alpha-carbinolamine dehydratase of Hydrogenovibrio crunogenus (strain DSM 25203 / XCL-2) (Thiomicrospira crunogena).